Reading from the N-terminus, the 414-residue chain is Serine hydroxymethyltransferase (414 aa).

(6S)-5,6,7,8-tetrahydrofolate-binding positions include L121 and 125 to 127 (GHL). Residue K229 is modified to N6-(pyridoxal phosphate)lysine.

It belongs to the SHMT family. As to quaternary structure, homodimer. Pyridoxal 5'-phosphate is required as a cofactor.

The protein resides in the cytoplasm. The catalysed reaction is (6R)-5,10-methylene-5,6,7,8-tetrahydrofolate + glycine + H2O = (6S)-5,6,7,8-tetrahydrofolate + L-serine. It functions in the pathway one-carbon metabolism; tetrahydrofolate interconversion. The protein operates within amino-acid biosynthesis; glycine biosynthesis; glycine from L-serine: step 1/1. Catalyzes the reversible interconversion of serine and glycine with tetrahydrofolate (THF) serving as the one-carbon carrier. This reaction serves as the major source of one-carbon groups required for the biosynthesis of purines, thymidylate, methionine, and other important biomolecules. Also exhibits THF-independent aldolase activity toward beta-hydroxyamino acids, producing glycine and aldehydes, via a retro-aldol mechanism. The chain is Serine hydroxymethyltransferase from Paracidovorax citrulli (strain AAC00-1) (Acidovorax citrulli).